The chain runs to 291 residues: Methionine aminopeptidase (291 aa).

Residue histidine 65 coordinates substrate. Residues aspartate 85, aspartate 96, and histidine 155 each contribute to the a divalent metal cation site. Histidine 163 is a binding site for substrate. Residues glutamate 188 and glutamate 276 each coordinate a divalent metal cation.

Belongs to the peptidase M24A family. Methionine aminopeptidase archaeal type 2 subfamily. In terms of assembly, monomer. The cofactor is Co(2+). Zn(2+) serves as cofactor. Mn(2+) is required as a cofactor. Requires Fe(2+) as cofactor.

The catalysed reaction is Release of N-terminal amino acids, preferentially methionine, from peptides and arylamides.. Functionally, removes the N-terminal methionine from nascent proteins. The N-terminal methionine is often cleaved when the second residue in the primary sequence is small and uncharged (Met-Ala-, Cys, Gly, Pro, Ser, Thr, or Val). This chain is Methionine aminopeptidase, found in Archaeoglobus fulgidus (strain ATCC 49558 / DSM 4304 / JCM 9628 / NBRC 100126 / VC-16).